Reading from the N-terminus, the 394-residue chain is uncharacterized protein (394 aa).

Helical transmembrane passes span 13 to 33 (LITT…TTMI), 35 to 55 (MAPT…VLPT), 73 to 95 (TTMT…TLTV), 110 to 130 (ALTV…HMVL), 152 to 172 (IHMV…PTVL), 179 to 198 (LMVL…TLTV), 216 to 236 (VLLA…TVLP), 241 to 261 (VLMV…HMVL), 267 to 287 (VLMV…PTVL), 293 to 313 (VLMV…TLTV), 340 to 360 (MMTL…VTTI), and 372 to 392 (ILLC…YVSA).

It is found in the membrane. This is an uncharacterized protein from Saccharomyces cerevisiae (strain ATCC 204508 / S288c) (Baker's yeast).